The chain runs to 428 residues: Gamma-glutamyl phosphate reductase (428 aa).

It belongs to the gamma-glutamyl phosphate reductase family.

It localises to the cytoplasm. It catalyses the reaction L-glutamate 5-semialdehyde + phosphate + NADP(+) = L-glutamyl 5-phosphate + NADPH + H(+). Its pathway is amino-acid biosynthesis; L-proline biosynthesis; L-glutamate 5-semialdehyde from L-glutamate: step 2/2. Its function is as follows. Catalyzes the NADPH-dependent reduction of L-glutamate 5-phosphate into L-glutamate 5-semialdehyde and phosphate. The product spontaneously undergoes cyclization to form 1-pyrroline-5-carboxylate. This chain is Gamma-glutamyl phosphate reductase, found in Picosynechococcus sp. (strain ATCC 27264 / PCC 7002 / PR-6) (Agmenellum quadruplicatum).